The primary structure comprises 242 residues: DnaJ homolog subfamily B member 3 (242 aa).

The 69-residue stretch at 1–69 (MANYYEVLGV…KKRDVYDRYG (69 aa)) folds into the J domain.

As to expression, testis specific.

Functionally, may operate as a co-chaperone of the male germ cell- and haploid stage-specific Hsp70 proteins. The polypeptide is DnaJ homolog subfamily B member 3 (DNAJB3) (Macaca fuscata fuscata (Japanese macaque)).